A 392-amino-acid chain; its full sequence is Nicotinate phosphoribosyltransferase (392 aa).

At His-216 the chain carries Phosphohistidine; by autocatalysis.

Belongs to the NAPRTase family. Post-translationally, transiently phosphorylated on a His residue during the reaction cycle. Phosphorylation strongly increases the affinity for substrates and increases the rate of nicotinate D-ribonucleotide production. Dephosphorylation regenerates the low-affinity form of the enzyme, leading to product release.

The catalysed reaction is nicotinate + 5-phospho-alpha-D-ribose 1-diphosphate + ATP + H2O = nicotinate beta-D-ribonucleotide + ADP + phosphate + diphosphate. It participates in cofactor biosynthesis; NAD(+) biosynthesis; nicotinate D-ribonucleotide from nicotinate: step 1/1. Catalyzes the synthesis of beta-nicotinate D-ribonucleotide from nicotinate and 5-phospho-D-ribose 1-phosphate at the expense of ATP. This is Nicotinate phosphoribosyltransferase from Cupriavidus necator (strain ATCC 17699 / DSM 428 / KCTC 22496 / NCIMB 10442 / H16 / Stanier 337) (Ralstonia eutropha).